An 836-amino-acid chain; its full sequence is Spliceosome associated factor 3, U4/U6 recycling protein (836 aa).

HAT repeat units follow at residues 127–163 (EDFKFCRDVCSKALENLGTRYDSGGHIWLIFLEYEMS), 296–329 (KLPQVAVKVYSRALRHCPYSFVLHQQALLAFERD), 331–367 (RPNEEIDALWERARSNVINSAEEGRSLYRTYAFLLRR), 418–451 (KNMDKCRNIWNDILASGFGRFAGKWIEAVRLERQ), and 453–486 (GDKENARKYLNKALNSVSDNINEIYMYYVQFERE). The interval 507-585 (RAIRPQKKVS…APGSFAVQKA (79 aa)) is disordered. The span at 540–550 (IVKKVKGDDGG) shows a compositional bias: basic and acidic residues. Over residues 558–579 (SNAKSSSAVSSSNASSTPAPGS) the composition is skewed to low complexity. RRM domains are found at residues 593–668 (RTIF…ANDP) and 683–760 (SKVF…LSNP). Disordered stretches follow at residues 757–786 (LSNPPVKKDKSHGKPAAIGASLEEDGPRKG) and 811–830 (AMDVSEGTSTSQPLSNDQFR). A compositionally biased stretch (polar residues) spans 816-827 (EGTSTSQPLSND).

As to quaternary structure, forms a complex composed of sart-3, terminal uridylyltransferase usip-1 and U6 snRNA; complex formation is mediated by usip-1 and sart-3 binding to U6 snRNA. Associates with U4 and U6 snRNP complexes, probably by interacting with U4 and U6 snRNAs. Ubiquitously expressed.

Its subcellular location is the nucleus. The protein resides in the nucleoplasm. U6 snRNP-binding protein that functions as a recycling factor of the splicing machinery. Promotes the initial reassembly of U4 and U6 snRNPs following their ejection from the spliceosome during its maturation. The sequence is that of Spliceosome associated factor 3, U4/U6 recycling protein from Caenorhabditis elegans.